The following is a 161-amino-acid chain: Large ribosomal subunit protein bL17 (161 aa).

A disordered region spans residues 126-161 (TAAKKAPKTRRSRKKATASVAEAPTAEAASEEKAAE). Residues 130–141 (KAPKTRRSRKKA) show a composition bias toward basic residues. The segment covering 142–153 (TASVAEAPTAEA) has biased composition (low complexity).

Belongs to the bacterial ribosomal protein bL17 family. In terms of assembly, part of the 50S ribosomal subunit. Contacts protein L32.

The polypeptide is Large ribosomal subunit protein bL17 (Parabacteroides distasonis (strain ATCC 8503 / DSM 20701 / CIP 104284 / JCM 5825 / NCTC 11152)).